The sequence spans 141 residues: Auxin-responsive protein SAUR64 (141 aa).

Belongs to the ARG7 family.

The protein resides in the cell membrane. Functionally, may promote auxin-stimulated organ elongation, such as hypocotyls, stamen filaments and petals. The protein is Auxin-responsive protein SAUR64 of Arabidopsis thaliana (Mouse-ear cress).